Reading from the N-terminus, the 66-residue chain is Translational regulator CsrA (66 aa).

This sequence belongs to the CsrA/RsmA family. As to quaternary structure, homodimer; the beta-strands of each monomer intercalate to form a hydrophobic core, while the alpha-helices form wings that extend away from the core.

Its subcellular location is the cytoplasm. In terms of biological role, a key translational regulator that binds mRNA to regulate translation initiation and/or mRNA stability. Mediates global changes in gene expression, shifting from rapid growth to stress survival by linking envelope stress, the stringent response and the catabolite repression systems. Usually binds in the 5'-UTR; binding at or near the Shine-Dalgarno sequence prevents ribosome-binding, repressing translation, binding elsewhere in the 5'-UTR can activate translation and/or stabilize the mRNA. Its function is antagonized by small RNA(s). The protein is Translational regulator CsrA of Alkalilimnicola ehrlichii (strain ATCC BAA-1101 / DSM 17681 / MLHE-1).